We begin with the raw amino-acid sequence, 506 residues long: Maturase K (506 aa).

It belongs to the intron maturase 2 family. MatK subfamily.

It is found in the plastid. Its subcellular location is the chloroplast. Functionally, usually encoded in the trnK tRNA gene intron. Probably assists in splicing its own and other chloroplast group II introns. The polypeptide is Maturase K (Andromeda polifolia (Bog rosemary)).